The sequence spans 310 residues: Beta-ketoacyl-[acyl-carrier-protein] synthase III 1 (310 aa).

Active-site residues include C112 and H235. The tract at residues 236–240 (QANIR) is ACP-binding. Residue N265 is part of the active site.

The protein belongs to the thiolase-like superfamily. FabH family. Homodimer.

Its subcellular location is the cytoplasm. It carries out the reaction malonyl-[ACP] + acetyl-CoA + H(+) = 3-oxobutanoyl-[ACP] + CO2 + CoA. It functions in the pathway lipid metabolism; fatty acid biosynthesis. Functionally, catalyzes the condensation reaction of fatty acid synthesis by the addition to an acyl acceptor of two carbons from malonyl-ACP. Catalyzes the first condensation reaction which initiates fatty acid synthesis and may therefore play a role in governing the total rate of fatty acid production. Possesses both acetoacetyl-ACP synthase and acetyl transacylase activities. Its substrate specificity determines the biosynthesis of branched-chain and/or straight-chain of fatty acids. This is Beta-ketoacyl-[acyl-carrier-protein] synthase III 1 from Bacillus cereus (strain ATCC 14579 / DSM 31 / CCUG 7414 / JCM 2152 / NBRC 15305 / NCIMB 9373 / NCTC 2599 / NRRL B-3711).